A 304-amino-acid chain; its full sequence is Acetyl-coenzyme A carboxylase carboxyl transferase subunit beta (304 aa).

The 270-residue stretch at 25 to 294 (LWIKCPETGE…KAIKRDTATE (270 aa)) folds into the CoA carboxyltransferase N-terminal domain.

Belongs to the AccD/PCCB family. As to quaternary structure, acetyl-CoA carboxylase is a heterohexamer composed of biotin carboxyl carrier protein (AccB), biotin carboxylase (AccC) and two subunits each of ACCase subunit alpha (AccA) and ACCase subunit beta (AccD).

It localises to the cytoplasm. It carries out the reaction N(6)-carboxybiotinyl-L-lysyl-[protein] + acetyl-CoA = N(6)-biotinyl-L-lysyl-[protein] + malonyl-CoA. The protein operates within lipid metabolism; malonyl-CoA biosynthesis; malonyl-CoA from acetyl-CoA: step 1/1. Component of the acetyl coenzyme A carboxylase (ACC) complex. Biotin carboxylase (BC) catalyzes the carboxylation of biotin on its carrier protein (BCCP) and then the CO(2) group is transferred by the transcarboxylase to acetyl-CoA to form malonyl-CoA. The protein is Acetyl-coenzyme A carboxylase carboxyl transferase subunit beta of Sinorhizobium medicae (strain WSM419) (Ensifer medicae).